A 373-amino-acid polypeptide reads, in one-letter code: Chaperone protein DnaJ (373 aa).

Positions 5–70 constitute a J domain; the sequence is DYYEVLGVHR…QQRVIYDQYG (66 aa). Residues 136 to 214 form a CR-type zinc finger; sequence GLETKIQIPR…CHGSGRVRGK (79 aa). Residues C149, C152, C166, C169, C188, C191, C202, and C205 each coordinate Zn(2+). 4 CXXCXGXG motif repeats span residues 149-156, 166-173, 188-195, and 202-209; these read CGTCDGIG, CPTCQGAG, CPECNGEG, and CEECHGSG.

Belongs to the DnaJ family. As to quaternary structure, homodimer. Zn(2+) is required as a cofactor.

Its subcellular location is the cytoplasm. Functionally, participates actively in the response to hyperosmotic and heat shock by preventing the aggregation of stress-denatured proteins and by disaggregating proteins, also in an autonomous, DnaK-independent fashion. Unfolded proteins bind initially to DnaJ; upon interaction with the DnaJ-bound protein, DnaK hydrolyzes its bound ATP, resulting in the formation of a stable complex. GrpE releases ADP from DnaK; ATP binding to DnaK triggers the release of the substrate protein, thus completing the reaction cycle. Several rounds of ATP-dependent interactions between DnaJ, DnaK and GrpE are required for fully efficient folding. Also involved, together with DnaK and GrpE, in the DNA replication of plasmids through activation of initiation proteins. The protein is Chaperone protein DnaJ of Syntrophotalea carbinolica (strain DSM 2380 / NBRC 103641 / GraBd1) (Pelobacter carbinolicus).